The following is a 248-amino-acid chain: Tryptophan synthase alpha chain (248 aa).

Active-site proton acceptor residues include E36 and D47.

Belongs to the TrpA family. Tetramer of two alpha and two beta chains.

The enzyme catalyses (1S,2R)-1-C-(indol-3-yl)glycerol 3-phosphate + L-serine = D-glyceraldehyde 3-phosphate + L-tryptophan + H2O. It participates in amino-acid biosynthesis; L-tryptophan biosynthesis; L-tryptophan from chorismate: step 5/5. In terms of biological role, the alpha subunit is responsible for the aldol cleavage of indoleglycerol phosphate to indole and glyceraldehyde 3-phosphate. In Pyrococcus furiosus (strain ATCC 43587 / DSM 3638 / JCM 8422 / Vc1), this protein is Tryptophan synthase alpha chain.